The primary structure comprises 90 residues: uncharacterized protein (90 aa).

It localises to the mitochondrion. This is an uncharacterized protein from Ascobolus immersus.